Reading from the N-terminus, the 449-residue chain is N-succinylarginine dihydrolase (449 aa).

Residues 19 to 28 (GGLSYGNVAS), asparagine 110, and 137 to 138 (HR) contribute to the substrate site. Residues 23–43 (YGNVASQSNSQQGSNPREAAR) are disordered. Residues 25 to 37 (NVASQSNSQQGSN) show a composition bias toward polar residues. Residue glutamate 174 is part of the active site. Arginine 214 serves as a coordination point for substrate. Residue histidine 250 is part of the active site. Residues aspartate 252 and asparagine 365 each contribute to the substrate site. The Nucleophile role is filled by cysteine 371.

The protein belongs to the succinylarginine dihydrolase family. As to quaternary structure, homodimer.

The catalysed reaction is N(2)-succinyl-L-arginine + 2 H2O + 2 H(+) = N(2)-succinyl-L-ornithine + 2 NH4(+) + CO2. It participates in amino-acid degradation; L-arginine degradation via AST pathway; L-glutamate and succinate from L-arginine: step 2/5. Functionally, catalyzes the hydrolysis of N(2)-succinylarginine into N(2)-succinylornithine, ammonia and CO(2). The polypeptide is N-succinylarginine dihydrolase (Pseudomonas entomophila (strain L48)).